A 480-amino-acid polypeptide reads, in one-letter code: G-protein coupled receptor seb-2 (480 aa).

The Extracellular portion of the chain corresponds to 1-222 (MNPSISTAGA…CMSNGDVEAR (222 aa)). Asparagine 95 carries an N-linked (GlcNAc...) asparagine glycan. The helical transmembrane segment at 223–243 (ILAGLLTYSASVIFLIPAVFL) threads the bilayer. The Cytoplasmic portion of the chain corresponds to 244 to 261 (LTLLRPIRCQPMFILHRH). A helical membrane pass occupies residues 262–282 (LLISCLLYGAFYLITVSLFVV). Residues 283 to 305 (NDAPLSSQVFQNHLFCRLLFSIQ) lie on the Extracellular side of the membrane. The helical transmembrane segment at 306-328 (LRYLRLTNFTWMLAEAVYLWRLL) threads the bilayer. Residues 329-343 (HTAQHSEGETLRSYK) lie on the Cytoplasmic side of the membrane. Residues 344–364 (VICWGVPGVITVVYIFVRSLN) form a helical membrane-spanning segment. The Extracellular segment spans residues 365–386 (DDVGMCWIENSTVAWIEWMIIT). A helical transmembrane segment spans residues 387–407 (PSLLAMGVNLLLLGLIVYILV). Residues 408 to 423 (KKLRCDPHLERIQYRK) are Cytoplasmic-facing. Residues 424–444 (AVRGALMLIPVFGVQQLLTIY) form a helical membrane-spanning segment. The Extracellular segment spans residues 445 to 480 (RFRNVCLIYRLLHKSFCRRMCSEILVITSGEAGSRS).

It belongs to the G-protein coupled receptor 2 family. As to expression, present in the head body-wall muscles from the L1 larval stage through to adulthood. Also expressed between L4 and the adult molt in vulval vm1 muscle cells. These cells play a role in opening the vulva during egg laying.

Its subcellular location is the cell membrane. Not known. Putative receptor. The protein is G-protein coupled receptor seb-2 of Caenorhabditis elegans.